The chain runs to 333 residues: Elongation factor Ts, mitochondrial (333 aa).

Residues 1–17 (MLRTLRPTLPSRCLRLY) constitute a mitochondrion transit peptide.

Belongs to the EF-Ts family.

The protein localises to the mitochondrion. Functionally, associates with the EF-Tu.GDP complex and induces the exchange of GDP to GTP. It remains bound to the aminoacyl-tRNA.EF-Tu.GTP complex up to the GTP hydrolysis stage on the ribosome. This Coprinopsis cinerea (strain Okayama-7 / 130 / ATCC MYA-4618 / FGSC 9003) (Inky cap fungus) protein is Elongation factor Ts, mitochondrial.